The sequence spans 285 residues: MVAKILDGKQIAKDYRQGLQDQVEALKEKGYTPKLSVILVGNNGASLSYVKSKKKAAEKIGMISEIVHLEETATEEEVLNELERLNNDDSVSGILVQVPLPSQVSEQKVLEAINPEKDVDGFHPQNIGKLYIDEQTFVPCTPLGIMELLKNADIDLDGKDAVVIGRSHIVGQPVSKLLIQQNATVTILHSHSKDMSKYLKEADVIVSAVGKPGLVTKEDVKEGAVVIDVGNTPDENGKLKGDVEYEDVKEVAGAITPVPGGVGPMTITMVLNNTLLAEKMRRGLE.

NADP(+) is bound by residues 165–167 and Ser190; that span reads GRS.

It belongs to the tetrahydrofolate dehydrogenase/cyclohydrolase family. In terms of assembly, homodimer.

It carries out the reaction (6R)-5,10-methylene-5,6,7,8-tetrahydrofolate + NADP(+) = (6R)-5,10-methenyltetrahydrofolate + NADPH. The catalysed reaction is (6R)-5,10-methenyltetrahydrofolate + H2O = (6R)-10-formyltetrahydrofolate + H(+). The protein operates within one-carbon metabolism; tetrahydrofolate interconversion. In terms of biological role, catalyzes the oxidation of 5,10-methylenetetrahydrofolate to 5,10-methenyltetrahydrofolate and then the hydrolysis of 5,10-methenyltetrahydrofolate to 10-formyltetrahydrofolate. This chain is Bifunctional protein FolD, found in Staphylococcus carnosus (strain TM300).